The primary structure comprises 263 residues: Endonuclease 8 (263 aa).

Pro2 functions as the Schiff-base intermediate with DNA in the catalytic mechanism. The Proton donor role is filled by Glu3. Lys53 (proton donor; for beta-elimination activity) is an active-site residue. Residues Gln70, Arg125, and Asn169 each coordinate DNA. The FPG-type zinc finger occupies 229-263 (KVFHRDGEPCERCGSIIEKTTLSSRPFYWCPGCQH). Catalysis depends on Arg253, which acts as the Proton donor; for delta-elimination activity.

The protein belongs to the FPG family. The cofactor is Zn(2+).

It carries out the reaction 2'-deoxyribonucleotide-(2'-deoxyribose 5'-phosphate)-2'-deoxyribonucleotide-DNA = a 3'-end 2'-deoxyribonucleotide-(2,3-dehydro-2,3-deoxyribose 5'-phosphate)-DNA + a 5'-end 5'-phospho-2'-deoxyribonucleoside-DNA + H(+). Functionally, involved in base excision repair of DNA damaged by oxidation or by mutagenic agents. Acts as a DNA glycosylase that recognizes and removes damaged bases. Has a preference for oxidized pyrimidines, such as thymine glycol, 5,6-dihydrouracil and 5,6-dihydrothymine. Has AP (apurinic/apyrimidinic) lyase activity and introduces nicks in the DNA strand. Cleaves the DNA backbone by beta-delta elimination to generate a single-strand break at the site of the removed base with both 3'- and 5'-phosphates. The protein is Endonuclease 8 of Shigella sonnei (strain Ss046).